Reading from the N-terminus, the 172-residue chain is MVEIKVIHGDITKMTVDAIVNAANTSLLGGGGVDGAIHRAAGPALLAACRPLHGCATGEAKITPGFRLPAKYVIHTPGPVWQGGQHNELQLLANSYRNSLNLAAENHCQTVAFPSISTGVYHFPLSIAAPLALKTLQATAQTTAHTVQTITIVCFDDQTQNVFSTALAALTN.

Residues 1 to 171 form the Macro domain; it reads MVEIKVIHGD…VFSTALAALT (171 aa).

It belongs to the MacroD-type family.

This Lactiplantibacillus plantarum (strain ATCC BAA-793 / NCIMB 8826 / WCFS1) (Lactobacillus plantarum) protein is Macro domain-containing protein lp_3408.